The sequence spans 516 residues: Effector protein hopAB1 (516 aa).

Disordered regions lie at residues 1 to 93 (MSGI…AQPA) and 175 to 259 (RALA…DEAL). The segment covering 16–30 (WRADDEPVTERERDS) has biased composition (basic and acidic residues). Residues 31–41 (SSGANLTNSPQ) are compositionally biased toward polar residues. Residues 81–90 (PVEPRQPPEA) show a composition bias toward pro residues. Composition is skewed to low complexity over residues 183 to 196 (PAPSRPVASSSRSS) and 212 to 224 (QTSSSSQATSSTS).

The protein belongs to the HopAB family.

The protein localises to the secreted. Effector protein that plays different roles depending on the species and plant cultivars that interact with the pathogen. Acts as a virulence determinant by enhancing the development of disease symptoms and bacterial growth. Acts as an avirulence factor by eliciting hypersensitive response (HR) and plant resistance. The protein is Effector protein hopAB1 (hopAB1) of Pseudomonas syringae pv. syringae (strain B728a).